We begin with the raw amino-acid sequence, 295 residues long: Methionine aminopeptidase (295 aa).

Histidine 63 contributes to the substrate binding site. 3 residues coordinate a divalent metal cation: aspartate 83, aspartate 94, and histidine 154. Substrate is bound at residue histidine 162. Glutamate 188 and glutamate 281 together coordinate a divalent metal cation.

Belongs to the peptidase M24A family. Methionine aminopeptidase archaeal type 2 subfamily. As to quaternary structure, monomer. Co(2+) serves as cofactor. It depends on Zn(2+) as a cofactor. Requires Mn(2+) as cofactor. Fe(2+) is required as a cofactor.

It catalyses the reaction Release of N-terminal amino acids, preferentially methionine, from peptides and arylamides.. Removes the N-terminal methionine from nascent proteins. The N-terminal methionine is often cleaved when the second residue in the primary sequence is small and uncharged (Met-Ala-, Cys, Gly, Pro, Ser, Thr, or Val). The sequence is that of Methionine aminopeptidase from Thermococcus kodakarensis (strain ATCC BAA-918 / JCM 12380 / KOD1) (Pyrococcus kodakaraensis (strain KOD1)).